The primary structure comprises 263 residues: Transmembrane protein 176B (263 aa).

4 helical membrane passes run 61-81, 89-109, 121-141, and 197-217; these read LGVTQILLGLVSCALGVCLYF, AFGCAFWSGSVAILAGVGTIV, VSCLLLLACIATAAAATVLGV, and LFLAFCIMLTVVCILEIVVSV. 3 positions are modified to phosphoserine: Ser231, Ser240, and Ser253. Residues 239-263 form a disordered region; sequence ESERKLLDGHPAPASPAKEKIPAIL.

The protein belongs to the TMEM176 family. As to expression, ubiquitously expressed with higher expression in lung, liver, kidney and colon. Expressed in cerebellar granule cells.

It localises to the nucleus membrane. May play a role in the process of maturation of dendritic cells. Required for the development of cerebellar granule cells. The sequence is that of Transmembrane protein 176B (Tmem176b) from Mus musculus (Mouse).